The chain runs to 976 residues: Chitin synthase 3A (976 aa).

The tract at residues 29–72 (DDANASNRSPVSNPYEPDYDQLSPPPMLGAQRPVPEQNESSRDL) is disordered. Positions 31–40 (ANASNRSPVS) are enriched in polar residues. N-linked (GlcNAc...) asparagine glycosylation is found at Asn-32, Asn-66, Asn-95, and Asn-602. A run of 7 helical transmembrane segments spans residues 639–659 (LLNV…TTII), 684–704 (IVNV…FVLA), 717–737 (VLSF…TGYL), 773–793 (LIII…FLYL), 801–821 (SFPQ…VYAF), 903–923 (TGLV…VTTD), and 944–964 (FLLY…LWFI).

It belongs to the chitin synthase family. Class III subfamily.

Its subcellular location is the cell membrane. It carries out the reaction [(1-&gt;4)-N-acetyl-beta-D-glucosaminyl](n) + UDP-N-acetyl-alpha-D-glucosamine = [(1-&gt;4)-N-acetyl-beta-D-glucosaminyl](n+1) + UDP + H(+). Its function is as follows. Polymerizes chitin, a structural polymer of the cell wall and septum, by transferring the sugar moiety of UDP-GlcNAc to the non-reducing end of the growing chitin polymer. Shows additive effects in septum formation with CHS1, CHS2, CHS4, CHS5, CHS6 and CHS7. Involved in virulence and mediates mycotoxin deoxinivalenol (DON) biosynthesis via the regulation of the expression of TRI4, TRI5 and TRI6. The polypeptide is Chitin synthase 3A (Gibberella zeae (strain ATCC MYA-4620 / CBS 123657 / FGSC 9075 / NRRL 31084 / PH-1) (Wheat head blight fungus)).